The sequence spans 125 residues: Small ribosomal subunit protein uS12m (125 aa).

The interval 1 to 24 is disordered; that stretch reads MPTSNQSIRHGREKKRRTDRTRAL. A compositionally biased stretch (basic residues) spans 9–19; it reads RHGREKKRRTD.

It belongs to the universal ribosomal protein uS12 family.

Its subcellular location is the mitochondrion. Protein S12 is involved in the translation initiation step. In Pinus sylvestris (Scotch pine), this protein is Small ribosomal subunit protein uS12m (RPS12).